A 146-amino-acid chain; its full sequence is Hemoglobin subunit beta (146 aa).

Residues 2-146 form the Globin domain; it reads HWSAEEKQLI…VAHALARKYH (145 aa). His-63 and His-92 together coordinate heme b.

It belongs to the globin family. In terms of assembly, heterotetramer of two alpha chains and two beta chains. In terms of tissue distribution, red blood cells.

Involved in oxygen transport from the lung to the various peripheral tissues. The chain is Hemoglobin subunit beta (HBB) from Streptopelia orientalis (Eastern turtle dove).